The sequence spans 1040 residues: MQVLPPGSTGGPSRLFILRPVATTLLMAAILLAGIIGYRFLPVAALPEVDYPTIQVVTLYPGASPDVMTSAVTAPLERQFGQMSGLKQMSSQSSGGASVVTLQFQLTLPLDVAEQEVQAAINAATNLLPSDLPNPPIYSKVNPADPPIMTLAVTSNAMPMTQVEDMVETRVAQKISQVSGVGLVTLAGGQRPAVRVKLNAQAVAALGLTSETVRTAITGANVNSAKGSLDGPERAVTLSANDQMQSADEYRRLIIAYQNGAPVRLGDVATVEQGAENSWLGAWANQAPAIVMNVQRQPGANIIATADSIRQMLPQLTESLPKSVKVTVLSDRTTNIRASVRDTQFELMLAIALVVMIIYLFLRNIPATIIPGVAVPLSLIGTFAVMVFLDFSINNLTLMALTIATGFVVDDAIVVIENISRYIEKGEKPLAAALKGAGEIGFTIISLTFSLIAVLIPLLFMGDIVGRLFREFAVTLAVAILISAVVSLTLTPMMCARMLSQQSLRKQNRFSRACERMFDRVIASYGRGLAKVLNHPWLTLSVAFATLLLSVMLWIVIPKGFFPVQDNGIIQGTLQAPQSSSYASMAQRQRQVAERILQDPAVQSLTTFVGVDGANSTLNSTRLQINLKPLDARDDRVQQVISRLQTAVATIPGVALYLQPTQDLTIDTQVSRTQYQFSLQATTLDALSHWVPKLQNALQSLPQLSEVSSDWQDRGLAAWVNVDRDSASRLGISMADVDNALYNAFGQRLISTIYTQANQYRVVLEHNTASTPGLAALETIRLTSRDGGTVPLSAIARIEQRFAPLSINHLDQFPITTFSFNVPEGYSLDDAVQAILDTEKTLALPADITTQFQGSTLAFQAALGSTVWLIVAAVVAMYIVLGVLYESFIHPITILSTLPTAGVGALLALIIAGSELDIIAIIGIILLIGIVKKNAIMMIDFALAAEREQGMSPRDAIFQACLLRFRPILMTTLAALLGALPLMLSTGVGAELRRPLGIAMVGGLLVSQVLTLFTTPVIYLLFDRLSLYVKSRFPRHKEEA.

12 helical membrane passes run 25-45 (LLMAAILLAGIIGYRFLPVAA), 347-367 (LMLAIALVVMIIYLFLRNIPA), 369-389 (IIPGVAVPLSLIGTFAVMVFL), 396-416 (LTLMALTIATGFVVDDAIVVI), 440-460 (IGFTIISLTFSLIAVLIPLLF), 472-492 (FAVTLAVAILISAVVSLTLTP), 537-557 (WLTLSVAFATLLLSVMLWIVI), 863-883 (LGSTVWLIVAAVVAMYIVLGV), 888-908 (FIHPITILSTLPTAGVGALLA), 910-930 (IIAGSELDIIAIIGIILLIGI), 968-988 (ILMTTLAALLGALPLMLSTGV), and 998-1018 (IAMVGGLLVSQVLTLFTTPVI).

Belongs to the resistance-nodulation-cell division (RND) (TC 2.A.6) family. MdtB subfamily. In terms of assembly, part of a tripartite efflux system composed of MdtA, MdtB and MdtC. MdtB forms a heteromultimer with MdtC.

It localises to the cell inner membrane. In Salmonella choleraesuis (strain SC-B67), this protein is Multidrug resistance protein MdtB.